Reading from the N-terminus, the 277-residue chain is Large ribosomal subunit protein uL2 (277 aa).

Disordered stretches follow at residues 37–59 (KNST…GGHK) and 221–265 (RGTA…KRTD). Over residues 50–59 (TTRHRGGGHK) the composition is skewed to basic residues. The segment covering 229 to 241 (DHPHGGGEGRTGE) has biased composition (basic and acidic residues).

The protein belongs to the universal ribosomal protein uL2 family. Part of the 50S ribosomal subunit. Forms a bridge to the 30S subunit in the 70S ribosome.

Its function is as follows. One of the primary rRNA binding proteins. Required for association of the 30S and 50S subunits to form the 70S ribosome, for tRNA binding and peptide bond formation. It has been suggested to have peptidyltransferase activity; this is somewhat controversial. Makes several contacts with the 16S rRNA in the 70S ribosome. The polypeptide is Large ribosomal subunit protein uL2 (Chromobacterium violaceum (strain ATCC 12472 / DSM 30191 / JCM 1249 / CCUG 213 / NBRC 12614 / NCIMB 9131 / NCTC 9757 / MK)).